The following is a 149-amino-acid chain: Arginine repressor (149 aa).

It belongs to the ArgR family.

The protein resides in the cytoplasm. It functions in the pathway amino-acid biosynthesis; L-arginine biosynthesis [regulation]. Functionally, regulates arginine biosynthesis genes. In Bacillus mycoides (strain KBAB4) (Bacillus weihenstephanensis), this protein is Arginine repressor.